Here is a 272-residue protein sequence, read N- to C-terminus: Orotidine 5'-phosphate decarboxylase (272 aa).

The Proton donor role is filled by K93.

This sequence belongs to the OMP decarboxylase family. Type 2 subfamily.

The catalysed reaction is orotidine 5'-phosphate + H(+) = UMP + CO2. It functions in the pathway pyrimidine metabolism; UMP biosynthesis via de novo pathway; UMP from orotate: step 2/2. This Roseiflexus sp. (strain RS-1) protein is Orotidine 5'-phosphate decarboxylase.